The following is a 1894-amino-acid chain: Plexin-A2 (1894 aa).

An N-terminal signal peptide occupies residues 1–34; sequence MEQRRFYLRAMQADNLSVVLLSVAWLLLARGTTG. N15 and N76 each carry an N-linked (GlcNAc...) asparagine glycan. The Sema domain occupies 35–508; that stretch reads MPQYSTFHSE…SERQVTRVPV (474 aa). Over 35-1237 the chain is Extracellular; the sequence is MPQYSTFHSE…VISDSLLTLP (1203 aa). Disulfide bonds link C94–C103 and C129–C137. Residues N163 and N327 are each glycosylated (N-linked (GlcNAc...) asparagine). Cystine bridges form between C284/C405, C300/C356, C374/C393, C511/C528, C517/C559, C520/C537, C531/C543, and C594/C613. Residues N598, N696, and N756 are each glycosylated (N-linked (GlcNAc...) asparagine). 4 IPT/TIG domains span residues 858–951, 954–1037, 1041–1139, and 1143–1228; these read PQIT…QYTF, PSVL…QFEY, PRVQ…KFIY, and PTFE…SVSV. N-linked (GlcNAc...) asparagine glycosylation is found at N1180 and N1205. A helical membrane pass occupies residues 1238 to 1258; that stretch reads AIISIAAGGSLLLIIVIIVLI. Residues 1259–1894 are Cytoplasmic-facing; the sequence is AYKRKSREND…HLINAMSIES (636 aa). A coiled-coil region spans residues 1261–1310; sequence KRKSRENDLTLKRLQMQMDNLESRVALECKEAFAELQTDINELTSDLDRS. S1612 is subject to Phosphoserine.

It belongs to the plexin family. In terms of assembly, homodimer. Interacts with RND1. Interacts directly with NRP1 and NRP2. The PLXNA2 homodimer interacts with a SEMA6A homodimer, giving rise to a heterotetramer.

Its subcellular location is the cell membrane. Its function is as follows. Coreceptor for SEMA3A and SEMA6A. Necessary for signaling by SEMA6A and class 3 semaphorins and subsequent remodeling of the cytoskeleton. Plays a role in axon guidance, invasive growth and cell migration. Class 3 semaphorins bind to a complex composed of a neuropilin and a plexin. The plexin modulates the affinity of the complex for specific semaphorins, and its cytoplasmic domain is required for the activation of down-stream signaling events in the cytoplasm. The chain is Plexin-A2 (Plxna2) from Mus musculus (Mouse).